A 430-amino-acid chain; its full sequence is MTSRNCPALLIAAPASGQGKTTVTAALARLHARQGKRVRVFKCGPDFLDPMILARASGKPVYQLDLWMVGEEESRRLLWEAAGEADLILIEGVMGLFDGAPSAADLARRFGVPVLAVIDGSAMAQTFGALAHGLKSFQPELPFAGVLANRVGSTRHGEILRDSLPESIRWYGALPRSVDMELPSRHLGLVQAEELADLDARLDAAADALAQSAETELPPAVSFAAPTRVSLAPLLAGVRIGVARDAAFAFLYQANLDLLQALGAELLFFSPLRFARLPAVDSLYLPGGYPELHLRALSRNGPMAEAIRAHHAAGKPILAECGGMLYLLDGLTDRGDERAEMLGLLPGEARMQQRLSALALQEVELPEGRLRGHTFHHSMLESPLQPLARGECPNYKRTAEAVYRSGRLTASYIHFYLPSDPLAAAALLRP.

The GATase cobBQ-type domain maps to 239–422 (RIGVARDAAF…IHFYLPSDPL (184 aa)). The active-site Nucleophile is C321.

The protein belongs to the CobB/CbiA family. Mg(2+) serves as cofactor.

The catalysed reaction is hydrogenobyrinate + 2 L-glutamine + 2 ATP + 2 H2O = hydrogenobyrinate a,c-diamide + 2 L-glutamate + 2 ADP + 2 phosphate + 2 H(+). It participates in cofactor biosynthesis; adenosylcobalamin biosynthesis; cob(II)yrinate a,c-diamide from precorrin-2 (aerobic route): step 9/10. In terms of biological role, catalyzes the ATP-dependent amidation of the two carboxylate groups at positions a and c of hydrogenobyrinate, using either L-glutamine or ammonia as the nitrogen source. The chain is Hydrogenobyrinate a,c-diamide synthase from Stutzerimonas stutzeri (strain A1501) (Pseudomonas stutzeri).